The sequence spans 116 residues: Nucleoid-associated protein PMT9312_0020 (116 aa).

The protein belongs to the YbaB/EbfC family. As to quaternary structure, homodimer.

It is found in the cytoplasm. Its subcellular location is the nucleoid. Functionally, binds to DNA and alters its conformation. May be involved in regulation of gene expression, nucleoid organization and DNA protection. In Prochlorococcus marinus (strain MIT 9312), this protein is Nucleoid-associated protein PMT9312_0020.